The following is a 500-amino-acid chain: Organic cation/carnitine transporter 7 (500 aa).

Residues 1–23 lie on the Cytoplasmic side of the membrane; it reads MADGNTRFTVDEALVAMGFGKFQ. Residues 24–44 form a helical membrane-spanning segment; sequence IYVLAYAGMGWVAEAMEMMLL. The Extracellular segment spans residues 45–62; that stretch reads SFVGPAVQSLWNLSARQE. The N-linked (GlcNAc...) asparagine glycan is linked to N56. The chain crosses the membrane as a helical span at residues 63–83; that stretch reads SLITSVVFAGMLIGAYSWGIV. Residues 84–97 are Cytoplasmic-facing; sequence SDKHGRRKGFIITA. The chain crosses the membrane as a helical span at residues 98–118; the sequence is VVTFVAGFLSAFSPNYMWLII. The Extracellular segment spans residues 119–120; the sequence is LR. The chain crosses the membrane as a helical span at residues 121–141; that stretch reads CLVGLGLGGGPVLASWYLEFI. 137–144 contributes to the ATP binding site; that stretch reads YLEFIPAP. The Cytoplasmic segment spans residues 142–150; it reads PAPSRGTWM. Residues 151–171 form a helical membrane-spanning segment; it reads VVFSAFWTVGTIFEASLAWLV. Topologically, residues 172-174 are extracellular; sequence MPR. A helical transmembrane segment spans residues 175–195; sequence LGWRWLLAFSSVPSSLLLLFY. Topologically, residues 196-293 are cytoplasmic; the sequence is RWTSESPRYL…ALLSPTLMKR (98 aa). Residues 294 to 314 form a helical membrane-spanning segment; it reads TLLLWVVFFGNAFAYYGVVLL. Over 315-341 the chain is Extracellular; it reads TTELNNSHNRCYPTEKQLRNSNDVNYR. N319 is a glycosylation site (N-linked (GlcNAc...) asparagine). Residues 342-362 traverse the membrane as a helical segment; it reads DVFIASFAEFPGLLISAAMVD. Residues 363–367 are Cytoplasmic-facing; it reads RLGRK. Residues 368-387 form a helical membrane-spanning segment; it reads ASMASMLFTCCIFLLPLLSH. The Extracellular segment spans residues 388–401; that stretch reads QSPFITTVLLFGGR. The chain crosses the membrane as a helical span at residues 402–422; it reads ICISAAFTVVYIYAPEIYPTA. The Cytoplasmic segment spans residues 423-429; sequence VRTTGVG. Residues 430-450 form a helical membrane-spanning segment; it reads VGSSVGRIGGILCPLVAVGLV. Topologically, residues 451–456 are extracellular; the sequence is HGCHQT. Residues 457 to 477 form a helical membrane-spanning segment; sequence IAVLLFEVVILVSGICVCLFP. Residues 478–500 are Cytoplasmic-facing; it reads FETSGRDLTDSISASKEPPSASV.

It belongs to the major facilitator (TC 2.A.1) superfamily. Organic cation transporter (TC 2.A.1.19) family. In terms of tissue distribution, expressed in pollen.

It is found in the membrane. Functionally, high affinity carnitine transporter involved in the active cellular uptake of carnitine. Also transports organic cations. In Arabidopsis thaliana (Mouse-ear cress), this protein is Organic cation/carnitine transporter 7 (OCT7).